Here is a 351-residue protein sequence, read N- to C-terminus: Protein MSS2, mitochondrial (351 aa).

TPR repeat units follow at residues 155–188 (HLTVKLIGDLFFENKTYDKAEKYYQEFLKLENST) and 260–294 (KECFKTLGFLELNYFNNYERAKEWFKTGMEIMDLE).

In terms of assembly, interacts with COX18.

The protein resides in the mitochondrion inner membrane. Required to stabilize mitochondrial cytochrome C oxidase subunit 2 (COX2) and to translocate the C-terminal domain of COX2 through the inner membrane. The chain is Protein MSS2, mitochondrial (MSS2) from Saccharomyces cerevisiae (strain ATCC 204508 / S288c) (Baker's yeast).